The chain runs to 272 residues: Rhamnulose-1-phosphate aldolase (272 aa).

The active site involves E117. H141, H143, and H212 together coordinate Zn(2+).

The protein belongs to the aldolase class II family. RhaD subfamily. Zn(2+) is required as a cofactor.

Its subcellular location is the cytoplasm. The catalysed reaction is L-rhamnulose 1-phosphate = (S)-lactaldehyde + dihydroxyacetone phosphate. It participates in carbohydrate degradation; L-rhamnose degradation; glycerone phosphate from L-rhamnose: step 3/3. Catalyzes the reversible cleavage of L-rhamnulose-1-phosphate to dihydroxyacetone phosphate (DHAP) and L-lactaldehyde. In Mannheimia succiniciproducens (strain KCTC 0769BP / MBEL55E), this protein is Rhamnulose-1-phosphate aldolase.